Consider the following 307-residue polypeptide: Elongation factor Ts (307 aa).

The segment at 80 to 83 is involved in Mg(2+) ion dislocation from EF-Tu; sequence TDFV.

It belongs to the EF-Ts family.

Its subcellular location is the cytoplasm. Functionally, associates with the EF-Tu.GDP complex and induces the exchange of GDP to GTP. It remains bound to the aminoacyl-tRNA.EF-Tu.GTP complex up to the GTP hydrolysis stage on the ribosome. This is Elongation factor Ts from Nitrobacter hamburgensis (strain DSM 10229 / NCIMB 13809 / X14).